The following is a 66-amino-acid chain: Sodium channel alpha-toxin Acra8 (66 aa).

In terms of domain architecture, LCN-type CS-alpha/beta spans 2-64 (RDGYIVDDKN…VPIKEKGRCN (63 aa)). Cystine bridges form between C12–C63, C16–C36, C22–C46, and C26–C48. N64 carries the asparagine amide modification. Positions 65–66 (GR) are excised as a propeptide.

It belongs to the long (4 C-C) scorpion toxin superfamily. Sodium channel inhibitor family. Alpha subfamily. Expressed by the venom gland.

It is found in the secreted. Alpha toxins bind voltage-independently at site-3 of sodium channels (Nav) and inhibit the inactivation of the activated channels, thereby blocking neuronal transmission. This Androctonus crassicauda (Arabian fat-tailed scorpion) protein is Sodium channel alpha-toxin Acra8.